A 565-amino-acid polypeptide reads, in one-letter code: Adenine deaminase (565 aa).

It belongs to the metallo-dependent hydrolases superfamily. Adenine deaminase family. It depends on Mn(2+) as a cofactor.

The enzyme catalyses adenine + H2O + H(+) = hypoxanthine + NH4(+). This Gluconobacter oxydans (strain 621H) (Gluconobacter suboxydans) protein is Adenine deaminase.